Here is a 70-residue protein sequence, read N- to C-terminus: Cold shock-like protein CspB (70 aa).

The 61-residue stretch at 7–67 (GLVKWFDAGK…GQKGPSAVNV (61 aa)) folds into the CSD domain.

The protein localises to the cytoplasm. The polypeptide is Cold shock-like protein CspB (cspB) (Yersinia enterocolitica).